Consider the following 522-residue polypeptide: Stellatic acid synthase (522 aa).

Residues 23–43 traverse the membrane as a helical segment; it reads IYGIYEPLLALFAVYSVAVVV. N-linked (GlcNAc...) asparagine glycans are attached at residues Asn-267 and Asn-451. Cys-464 lines the heme pocket. N-linked (GlcNAc...) asparagine glycosylation occurs at Asn-495.

Belongs to the cytochrome P450 family. Requires heme as cofactor.

It is found in the membrane. It carries out the reaction stellata-2,6,19-triene + 3 reduced [NADPH--hemoprotein reductase] + 3 O2 = stellatate + 3 oxidized [NADPH--hemoprotein reductase] + 4 H2O + 4 H(+). Its pathway is secondary metabolite biosynthesis; terpenoid biosynthesis. Its function is as follows. Cytochrome P450 monooxygenase; part of the gene cluster that mediates the biosynthesis of the sesterterpene stellatic acid. The first step in the pathway is performed by the stellatatriene synthase that possesses both prenyl transferase and terpene cyclase activity, converting isopentenyl diphosphate and dimethylallyl diphosphate into geranylgeranyl diphosphate (GGDP) and then converting GGDP into stellata-2,6,19-triene. The cytochrome P450 monooxygenase Stl-P450 then catalyzes three successive oxidation reactions on the C-20 methyl group to generate the carboxylic acid of stellatic acid. The chain is Stellatic acid synthase from Emericella variicolor (Aspergillus stellatus).